A 322-amino-acid polypeptide reads, in one-letter code: Cytochrome c biogenesis protein CcsA (322 aa).

The next 8 membrane-spanning stretches (helical) occupy residues 6 to 26 (LQLILETFSFFIYFILTFLFF), 45 to 65 (LIANVSIFLLLITRWITAGYF), 69 to 89 (NLYESLFFLVWGLNTIWLFLY), 97 to 117 (LLDNSVSLLLTLLVGFLHFIL), 144 to 164 (MISYATLMIGSLLSIIYLYFL), 230 to 250 (LITFGFPLLTIGIIAGAVWAN), 265 to 285 (WALITWLIFAIYLHTRIIKGW), and 291 to 311 (AMVASLGFFIIWICYLGVNLL).

The protein belongs to the CcmF/CycK/Ccl1/NrfE/CcsA family. May interact with Ccs1.

The protein localises to the plastid. It localises to the cyanelle thylakoid membrane. Its function is as follows. Required during biogenesis of c-type cytochromes (cytochrome c6 and cytochrome f) at the step of heme attachment. The chain is Cytochrome c biogenesis protein CcsA from Cyanophora paradoxa.